Here is a 211-residue protein sequence, read N- to C-terminus: tRNA (guanine-N(7)-)-methyltransferase (211 aa).

S-adenosyl-L-methionine is bound by residues Asp40, Glu65, Asn92, and Asp117. The active site involves Asp117. Lys121 lines the substrate pocket. The interaction with RNA stretch occupies residues 123–128; it reads RHNKRR. Substrate is bound at residue Asp153.

It belongs to the class I-like SAM-binding methyltransferase superfamily. TrmB family.

It carries out the reaction guanosine(46) in tRNA + S-adenosyl-L-methionine = N(7)-methylguanosine(46) in tRNA + S-adenosyl-L-homocysteine. Its pathway is tRNA modification; N(7)-methylguanine-tRNA biosynthesis. Catalyzes the formation of N(7)-methylguanine at position 46 (m7G46) in tRNA. This is tRNA (guanine-N(7)-)-methyltransferase from Synechocystis sp. (strain ATCC 27184 / PCC 6803 / Kazusa).